The sequence spans 856 residues: Subtilisin-like protease SBT2.2 (856 aa).

The first 21 residues, 1 to 21 (MRRVLMVNFGVLLLFCFGVLS), serve as a signal peptide directing secretion. Residues 22-159 (NSFGQDNGGD…IVLDFSVRTA (138 aa)) constitute a propeptide, activation peptide. N-linked (GlcNAc...) asparagine glycosylation is found at Asn35 and Asn85. The Inhibitor I9 domain maps to 40-159 (VYIVTLRQAS…IVLDFSVRTA (120 aa)). The 546-residue stretch at 164–709 (PQFMGLPKGA…NGFVNATAAL (546 aa)) folds into the Peptidase S8 domain. Catalysis depends on Asp193, which acts as the Charge relay system. 2 N-linked (GlcNAc...) asparagine glycosylation sites follow: Asn204 and Asn255. The active-site Charge relay system is His269. N-linked (GlcNAc...) asparagine glycosylation is found at Asn412, Asn441, Asn495, Asn540, and Asn568. One can recognise a PA domain in the interval 432–528 (MISALDALKN…MDMPGIIIPS (97 aa)). Residue Ser634 is the Charge relay system of the active site. N-linked (GlcNAc...) asparagine glycans are attached at residues Asn704, Asn730, Asn738, Asn748, Asn767, Asn782, and Asn823.

Belongs to the peptidase S8 family.

The protein resides in the secreted. In Arabidopsis thaliana (Mouse-ear cress), this protein is Subtilisin-like protease SBT2.2.